The sequence spans 342 residues: Tetraacyldisaccharide 4'-kinase (342 aa).

68–75 provides a ligand contact to ATP; sequence TVGGTGKT.

It belongs to the LpxK family.

The catalysed reaction is a lipid A disaccharide + ATP = a lipid IVA + ADP + H(+). It functions in the pathway glycolipid biosynthesis; lipid IV(A) biosynthesis; lipid IV(A) from (3R)-3-hydroxytetradecanoyl-[acyl-carrier-protein] and UDP-N-acetyl-alpha-D-glucosamine: step 6/6. Transfers the gamma-phosphate of ATP to the 4'-position of a tetraacyldisaccharide 1-phosphate intermediate (termed DS-1-P) to form tetraacyldisaccharide 1,4'-bis-phosphate (lipid IVA). This is Tetraacyldisaccharide 4'-kinase from Burkholderia thailandensis (strain ATCC 700388 / DSM 13276 / CCUG 48851 / CIP 106301 / E264).